Reading from the N-terminus, the 81-residue chain is Cortexin-3 (81 aa).

The helical transmembrane segment at Met29–Phe49 threads the bilayer.

Belongs to the cortexin family.

The protein resides in the membrane. This chain is Cortexin-3 (CTXN3), found in Homo sapiens (Human).